A 122-amino-acid polypeptide reads, in one-letter code: Ribosomal silencing factor RsfS (122 aa).

Belongs to the Iojap/RsfS family. In terms of assembly, interacts with ribosomal protein uL14 (rplN).

The protein resides in the cytoplasm. Functions as a ribosomal silencing factor. Interacts with ribosomal protein uL14 (rplN), blocking formation of intersubunit bridge B8. Prevents association of the 30S and 50S ribosomal subunits and the formation of functional ribosomes, thus repressing translation. The chain is Ribosomal silencing factor RsfS from Chromobacterium violaceum (strain ATCC 12472 / DSM 30191 / JCM 1249 / CCUG 213 / NBRC 12614 / NCIMB 9131 / NCTC 9757 / MK).